A 78-amino-acid chain; its full sequence is Large ribosomal subunit protein bL28 (78 aa).

The segment at 1 to 28 (MSRRCQVRGTKPEFGNNVSHSQRHTKRR) is disordered.

Belongs to the bacterial ribosomal protein bL28 family.

The sequence is that of Large ribosomal subunit protein bL28 from Cutibacterium acnes (strain DSM 16379 / KPA171202) (Propionibacterium acnes).